The sequence spans 1119 residues: DNA-directed RNA polymerase subunit beta (1119 aa).

It belongs to the RNA polymerase beta chain family. The RNAP catalytic core consists of 2 alpha, 1 beta, 1 beta' and 1 omega subunit. When a sigma factor is associated with the core the holoenzyme is formed, which can initiate transcription.

The catalysed reaction is RNA(n) + a ribonucleoside 5'-triphosphate = RNA(n+1) + diphosphate. In terms of biological role, DNA-dependent RNA polymerase catalyzes the transcription of DNA into RNA using the four ribonucleoside triphosphates as substrates. In Thermus thermophilus (strain ATCC 27634 / DSM 579 / HB8), this protein is DNA-directed RNA polymerase subunit beta.